The primary structure comprises 262 residues: 3-methyl-2-oxobutanoate hydroxymethyltransferase (262 aa).

Positions 43 and 82 each coordinate Mg(2+). Residues 43-44, Asp-82, and Lys-110 each bind 3-methyl-2-oxobutanoate; that span reads DS. Glu-112 lines the Mg(2+) pocket. Residue Glu-179 is the Proton acceptor of the active site.

The protein belongs to the PanB family. As to quaternary structure, homodecamer; pentamer of dimers. The cofactor is Mg(2+).

It localises to the cytoplasm. The catalysed reaction is 3-methyl-2-oxobutanoate + (6R)-5,10-methylene-5,6,7,8-tetrahydrofolate + H2O = 2-dehydropantoate + (6S)-5,6,7,8-tetrahydrofolate. The protein operates within cofactor biosynthesis; (R)-pantothenate biosynthesis; (R)-pantoate from 3-methyl-2-oxobutanoate: step 1/2. Catalyzes the reversible reaction in which hydroxymethyl group from 5,10-methylenetetrahydrofolate is transferred onto alpha-ketoisovalerate to form ketopantoate. The polypeptide is 3-methyl-2-oxobutanoate hydroxymethyltransferase (Sodalis glossinidius (strain morsitans)).